A 906-amino-acid chain; its full sequence is Cadherin-2 (906 aa).

An N-terminal signal peptide occupies residues 1-25; sequence MCRIAGALRTLLPLLAALLQASVEA. Residues 26–159 constitute a propeptide that is removed on maturation; sequence SGEIALCKTG…HSGHLQRQKR (134 aa). Serine 96 and serine 135 each carry phosphoserine; by FAM20C. Cadherin domains follow at residues 160–267, 268–382, 383–497, 498–603, and 604–714; these read DWVI…RPEF, LHQV…PPEF, TAMT…NPYF, APNP…DNAP, and QVLP…DVDR. Residues 160-724 lie on the Extracellular side of the membrane; sequence DWVIPPINLP…IVGAGLGTGA (565 aa). Residue glutamate 170 coordinates Ca(2+). Asparagine 190 carries N-linked (GlcNAc...) asparagine glycosylation. Ca(2+) is bound by residues aspartate 226, glutamate 228, aspartate 259, methionine 260, asparagine 261, aspartate 262, and asparagine 263. Asparagine 273 is a glycosylation site (N-linked (GlcNAc...) asparagine). Ca(2+) is bound by residues aspartate 293, aspartate 295, and asparagine 301. Asparagine 325 carries N-linked (GlcNAc...) asparagine glycosylation. Aspartate 353 serves as a coordination point for Ca(2+). N-linked (GlcNAc...) asparagine glycosylation is found at asparagine 402, asparagine 572, asparagine 651, and asparagine 692. A helical transmembrane segment spans residues 725–745; that stretch reads IIAILLCIIILLILVLMFVVW. The Cytoplasmic segment spans residues 746 to 906; that stretch reads MKRRDKERQA…LADMYGGGDD (161 aa). A compositionally biased stretch (low complexity) spans 863–880; that stretch reads SGSTAGSLSSLNSSSSGG. Positions 863–884 are disordered; that stretch reads SGSTAGSLSSLNSSSSGGEQDY.

As to quaternary structure, homodimer (via extracellular region). Can also form heterodimers with other cadherins (via extracellular region). Dimerization occurs in trans, i.e. with a cadherin chain from another cell. Interacts with CDCP1. Interacts with PCDH8; this complex may also include TAOK2. The interaction with PCDH8 may lead to internalization through TAOK2/p38 MAPK pathway. Identified in a complex containing FGFR4, NCAM1, CDH2, PLCG1, FRS2, SRC, SHC1, GAP43 and CTTN. May interact with OBSCN (via protein kinase domain 2). Interacts with FBXO45. Post-translationally, cleaved by MMP24. Ectodomain cleavage leads to the generation of a soluble 90 kDa N-terminal soluble fragment and a 45 kDa membrane-bound C-terminal fragment 1 (CTF1), which is further cleaved by gamma-secretase into a 35 kDa. Cleavage in neural stem cells by MMP24 affects CDH2-mediated anchorage of neural stem cells to ependymocytes in the adult subependymal zone, leading to modulate neural stem cell quiescence. May be phosphorylated by OBSCN.

The protein localises to the cell membrane. Its subcellular location is the sarcolemma. It localises to the cell junction. The protein resides in the cell surface. It is found in the desmosome. The protein localises to the adherens junction. Calcium-dependent cell adhesion protein; preferentially mediates homotypic cell-cell adhesion by dimerization with a CDH2 chain from another cell. Cadherins may thus contribute to the sorting of heterogeneous cell types. Acts as a regulator of neural stem cells quiescence by mediating anchorage of neural stem cells to ependymocytes in the adult subependymal zone: upon cleavage by MMP24, CDH2-mediated anchorage is affected, leading to modulate neural stem cell quiescence. Plays a role in cell-to-cell junction formation between pancreatic beta cells and neural crest stem (NCS) cells, promoting the formation of processes by NCS cells. Required for proper neurite branching. Required for pre- and postsynaptic organization. CDH2 may be involved in neuronal recognition mechanism. In hippocampal neurons, may regulate dendritic spine density. The chain is Cadherin-2 (CDH2) from Homo sapiens (Human).